We begin with the raw amino-acid sequence, 311 residues long: HPr kinase/phosphorylase (311 aa).

Residues His-138 and Lys-159 contribute to the active site. Position 153-160 (153-160) interacts with ATP; the sequence is GDSGIGKS. Ser-160 is a binding site for Mg(2+). Asp-177 functions as the Proton acceptor; for phosphorylation activity. Proton donor; for dephosphorylation activity in the catalytic mechanism. Residues 201–210 form an important for the catalytic mechanism of both phosphorylation and dephosphorylation region; sequence IEIRGVGIID. Mg(2+) is bound at residue Glu-202. Residue Arg-243 is part of the active site. Positions 264–269 are important for the catalytic mechanism of dephosphorylation; it reads PVKTGR.

This sequence belongs to the HPrK/P family. Homohexamer. Requires Mg(2+) as cofactor.

It carries out the reaction [HPr protein]-L-serine + ATP = [HPr protein]-O-phospho-L-serine + ADP + H(+). The enzyme catalyses [HPr protein]-O-phospho-L-serine + phosphate + H(+) = [HPr protein]-L-serine + diphosphate. Its function is as follows. Catalyzes the ATP- as well as the pyrophosphate-dependent phosphorylation of a specific serine residue in HPr, a phosphocarrier protein of the phosphoenolpyruvate-dependent sugar phosphotransferase system (PTS). HprK/P also catalyzes the pyrophosphate-producing, inorganic phosphate-dependent dephosphorylation (phosphorolysis) of seryl-phosphorylated HPr (P-Ser-HPr). The two antagonistic activities of HprK/P are regulated by several intracellular metabolites, which change their concentration in response to the absence or presence of rapidly metabolisable carbon sources (glucose, fructose, etc.) in the growth medium. Therefore, by controlling the phosphorylation state of HPr, HPrK/P is a sensor enzyme that plays a major role in the regulation of carbon metabolism and sugar transport: it mediates carbon catabolite repression (CCR), and regulates PTS-catalyzed carbohydrate uptake and inducer exclusion. The sequence is that of HPr kinase/phosphorylase from Streptococcus pneumoniae serotype 2 (strain D39 / NCTC 7466).